A 273-amino-acid chain; its full sequence is Flagellin FljN (273 aa).

This sequence belongs to the bacterial flagellin family. In C.crescentus, the flagellar filament is composed of multiple flagellins of 29 kDa; 27 kDa and 25 kDa.

It localises to the secreted. The protein localises to the bacterial flagellum. In terms of biological role, flagellin is the subunit protein which polymerizes to form the filaments of bacterial flagella. This chain is Flagellin FljN (fljN), found in Caulobacter vibrioides (strain ATCC 19089 / CIP 103742 / CB 15) (Caulobacter crescentus).